A 266-amino-acid chain; its full sequence is Non-structural maintenance of chromosomes element 1 homolog (266 aa).

Residues 1-102 (MQGSTRRMGV…SISKMATDFA (102 aa)) are interaction with NSMCE3. An RING-type; atypical zinc finger spans residues 191–232 (CNICHSLLIQGQSCETCGIRMHLPCVAKYFQSNAEPRCPHCN). Residues 246–266 (EKERESGVLKSNKKSLRSRQH) are disordered. Phosphoserine is present on serine 251. A compositionally biased stretch (basic residues) spans 256–266 (SNKKSLRSRQH).

It belongs to the NSE1 family. In terms of assembly, component of the SMC5-SMC6 complex which consists at least of SMC5, SMC6, NSMCE2, NSMCE1, NSMCE4A or EID3 and NSMCE3. NSMCE1, NSMCE4A or EID3 and NSMCE3 probably form a subcomplex that bridges the head domains of the SMC5-SMC6 heterodimer. Interacts with NSMCE3. Interacts with MAGEF1. Ubiquitinated.

It localises to the nucleus. Its subcellular location is the chromosome. It is found in the telomere. It catalyses the reaction S-ubiquitinyl-[E2 ubiquitin-conjugating enzyme]-L-cysteine + [acceptor protein]-L-lysine = [E2 ubiquitin-conjugating enzyme]-L-cysteine + N(6)-ubiquitinyl-[acceptor protein]-L-lysine.. Functionally, RING-type zinc finger-containing E3 ubiquitin ligase that assembles with melanoma antigen protein (MAGE) to catalyze the direct transfer of ubiquitin from E2 ubiquitin-conjugating enzyme to a specific substrate. Within MAGE-RING ubiquitin ligase complex, MAGE stimulates and specifies ubiquitin ligase activity likely through recruitment and/or stabilization of the E2 ubiquitin-conjugating enzyme at the E3:substrate complex. Involved in maintenance of genome integrity, DNA damage response and DNA repair. NSMCE3/MAGEG1 and NSMCE1 ubiquitin ligase are components of SMC5-SMC6 complex and may positively regulate homologous recombination-mediated DNA repair. MAGEF1-NSMCE1 ubiquitin ligase promotes proteasomal degradation of MMS19, a key component of the cytosolic iron-sulfur protein assembly (CIA) machinery. Down-regulation of MMS19 impairs the activity of several DNA repair and metabolism enzymes such as ERCC2/XPD, FANCJ, RTEL1 and POLD1 that require iron-sulfur clusters as cofactors. The protein is Non-structural maintenance of chromosomes element 1 homolog of Homo sapiens (Human).